Consider the following 592-residue polypeptide: V-type ATP synthase alpha chain (592 aa).

An ATP-binding site is contributed by 233–240 (GPFGSGKT).

The protein belongs to the ATPase alpha/beta chains family.

The catalysed reaction is ATP + H2O + 4 H(+)(in) = ADP + phosphate + 5 H(+)(out). Its function is as follows. Produces ATP from ADP in the presence of a proton gradient across the membrane. The V-type alpha chain is a catalytic subunit. The chain is V-type ATP synthase alpha chain from Clostridium botulinum (strain Loch Maree / Type A3).